We begin with the raw amino-acid sequence, 143 residues long: Spliceosomal protein DIB1 (143 aa).

It belongs to the DIM1 family. As to quaternary structure, component of the 25S [U4/U6.U5] tri-snRNP.

It is found in the nucleus. Essential role in pre-mRNA splicing. Also essential for entry into mitosis (G2/M progression) as well as for chromosome segregation during mitosis. This chain is Spliceosomal protein DIB1 (DIB1), found in Eremothecium gossypii (strain ATCC 10895 / CBS 109.51 / FGSC 9923 / NRRL Y-1056) (Yeast).